Consider the following 469-residue polypeptide: Calcium-binding mitochondrial carrier protein SCaMC-2-B (469 aa).

At 1–189 (MLCLCLYVPV…EKNTGMWWRH (189 aa)) the chain is on the mitochondrial intermembrane side. EF-hand domains follow at residues 47-80 (SYRKWRKKVVKAGDKDLDGQLDFEEFVHYLRDHE), 78-113 (DHEKKLRLVFKSLDKKNDGHIDSQEIMQSLRDLGVH), and 114-149 (ISEEQAEKILKSMDKNGTMTIDWNEWRDYHLLHPAE). Positions 60, 62, 64, 66, and 71 each coordinate Ca(2+). Solcar repeat units lie at residues 184 to 270 (GMWW…IKRL), 278 to 363 (LGIL…LKNS), and 375 to 463 (PGVF…LKIT). A helical transmembrane segment spans residues 190–207 (LVAGGGAGAVSRTCTAPL). Residues 208–244 (DRLKVLMQVHATRSNSMGIAGGFTQMIREGGLRSLWR) lie on the Mitochondrial matrix side of the membrane. A helical membrane pass occupies residues 245–264 (GNGINVLKIAPESAIKFMAY). Over 265-287 (EQIKRLIGSNQETLGILERLVSG) the chain is Mitochondrial intermembrane. Residues 288-301 (SLAGAIAQSSIYPM) form a helical membrane-spanning segment. Residues 302-337 (EVLKTRLALGRTGQYSGIADCAKHIFKKEGMTAFYK) lie on the Mitochondrial matrix side of the membrane. Residues 338 to 357 (GYIPNMLGIIPYAGIDLAVY) traverse the membrane as a helical segment. Residues 358-380 (ETLKNSWLQRFATDSADPGVFVL) lie on the Mitochondrial intermembrane side of the membrane. A helical membrane pass occupies residues 381–398 (LACGTMSSTCGQLASYPL). The Mitochondrial matrix segment spans residues 399–437 (ALVRTRMQAQASQEGSPQMTMSGLFRHIVRTEGAIGLYR). A helical membrane pass occupies residues 438–457 (GLAPNFMKVIPAVSISYVVY). Topologically, residues 458-469 (ENLKITLGVQSR) are mitochondrial intermembrane.

This sequence belongs to the mitochondrial carrier (TC 2.A.29) family.

The protein resides in the mitochondrion inner membrane. In terms of biological role, calcium-dependent mitochondrial solute carrier. This is Calcium-binding mitochondrial carrier protein SCaMC-2-B (slc25a25b) from Danio rerio (Zebrafish).